The sequence spans 588 residues: DELLA protein GAI (588 aa).

Residues 1–15 (MKRDRDRDREREKRA) show a composition bias toward basic and acidic residues. Residues 1-38 (MKRDRDRDREREKRAFSNGAVSSGKSKIWEEDEEEKPD) are disordered. A DELLA motif motif is present at residues 42–46 (DELLA). The interval 152–177 (GAVFNSDSNKRHRSTTSSFSTTSSSM) is disordered. Positions 166 to 177 (TTSSFSTTSSSM) are enriched in low complexity. In terms of domain architecture, GRAS spans 190–574 (VDSQETGVRL…RPLIATSAWK (385 aa)). The segment at 197–251 (VRLVHTLMACAEAVQQENLTLADQLVRHIGILAVSQSGAMRKVATYFAEALARRI) is leucine repeat I (LRI). The interval 269-334 (QMHFYETCPY…GGPPAFRLTG (66 aa)) is VHIID. The VHIID motif lies at 300-304 (VHVID). The interval 348-380 (QVGWKLAQLAETIGVEFEFRGFVANSLADLDAT) is leucine repeat II (LRII). The segment at 392 to 495 (VAINSVFELH…EVYLGRQICN (104 aa)) is PFYRE. The LXXLL motif signature appears at 400 to 404 (LHRLL). The interval 498-574 (ACEGSDRVER…RPLIATSAWK (77 aa)) is SAW.

It belongs to the GRAS family. DELLA subfamily. Post-translationally, phosphorylated. In terms of processing, ubiquitinated. Upon GA application it is ubiquitinated, leading to its subsequent degradation. Expressed in both vegetative and reproductive tissues.

The protein localises to the nucleus. In terms of biological role, probable transcriptional regulator that acts as a repressor of the gibberellin (GA) signaling pathway. Probably acts by participating in large multiprotein complexes that repress transcription of GA-inducible genes. Upon GA application, it is degraded by the proteasome, allowing the GA signaling pathway. Its degradation is not essential for germination. In Solanum lycopersicum (Tomato), this protein is DELLA protein GAI (GAI).